Consider the following 166-residue polypeptide: Chemoreceptor glutamine deamidase CheD (166 aa).

Belongs to the CheD family. In terms of assembly, forms a complex with CheC.

The enzyme catalyses L-glutaminyl-[protein] + H2O = L-glutamyl-[protein] + NH4(+). Deamidates glutamine residues to glutamate on methyl-accepting chemotaxis receptors (MCPs). CheD-mediated MCP deamidation is required for productive communication of the conformational signals of the chemoreceptors to the CheA kinase. The chain is Chemoreceptor glutamine deamidase CheD from Bacillus velezensis (strain DSM 23117 / BGSC 10A6 / LMG 26770 / FZB42) (Bacillus amyloliquefaciens subsp. plantarum).